Consider the following 162-residue polypeptide: Transcription elongation factor GreA (162 aa).

Residues 45-74 adopt a coiled-coil conformation; it reads ENAEYEAAREKQAFIEGRIKELEDMTARAE.

It belongs to the GreA/GreB family.

Necessary for efficient RNA polymerase transcription elongation past template-encoded arresting sites. The arresting sites in DNA have the property of trapping a certain fraction of elongating RNA polymerases that pass through, resulting in locked ternary complexes. Cleavage of the nascent transcript by cleavage factors such as GreA or GreB allows the resumption of elongation from the new 3'terminus. GreA releases sequences of 2 to 3 nucleotides. This Rickettsia felis (strain ATCC VR-1525 / URRWXCal2) (Rickettsia azadi) protein is Transcription elongation factor GreA.